The primary structure comprises 40 residues: MKVRASLKSLKQKEGSIVVRRRGKTYVLNKRNPRWKARQG.

The protein belongs to the bacterial ribosomal protein bL36 family.

This is Large ribosomal subunit protein bL36A from Kineococcus radiotolerans (strain ATCC BAA-149 / DSM 14245 / SRS30216).